Consider the following 75-residue polypeptide: MAIFKSISSISNSTGSMGSSIGTSNIVELTGNNNSISCFDGGYGGFNGLSGCGGSNANIINIDIDIGRRRRHRCC.

A disordered region spans residues 1–20 (MAIFKSISSISNSTGSMGSS).

It belongs to the UPF0512 family.

The polypeptide is UPF0512 protein D (Dictyostelium discoideum (Social amoeba)).